Reading from the N-terminus, the 215-residue chain is Cytochrome b6 (215 aa).

A helical membrane pass occupies residues 32–52; sequence IFYCLGGITLTCFLVQVASGF. Cysteine 35 is a heme c binding site. Heme b is bound by residues histidine 86 and histidine 100. 3 consecutive transmembrane segments (helical) span residues 90-110, 116-136, and 186-206; these read ASMM…TGGF, LTWV…VTGY, and LHTF…FLMI. 2 residues coordinate heme b: histidine 187 and histidine 202.

The protein belongs to the cytochrome b family. PetB subfamily. The 4 large subunits of the cytochrome b6-f complex are cytochrome b6, subunit IV (17 kDa polypeptide, PetD), cytochrome f and the Rieske protein, while the 4 small subunits are PetG, PetL, PetM and PetN. The complex functions as a dimer. Heme b is required as a cofactor. Heme c serves as cofactor.

The protein resides in the plastid. The protein localises to the chloroplast thylakoid membrane. Component of the cytochrome b6-f complex, which mediates electron transfer between photosystem II (PSII) and photosystem I (PSI), cyclic electron flow around PSI, and state transitions. The sequence is that of Cytochrome b6 from Anthoceros angustus (Hornwort).